Here is a 449-residue protein sequence, read N- to C-terminus: Glucose-6-phosphate isomerase (449 aa).

Glu291 (proton donor) is an active-site residue. Active-site residues include His312 and Lys426.

This sequence belongs to the GPI family.

It is found in the cytoplasm. The enzyme catalyses alpha-D-glucose 6-phosphate = beta-D-fructose 6-phosphate. The protein operates within carbohydrate biosynthesis; gluconeogenesis. It participates in carbohydrate degradation; glycolysis; D-glyceraldehyde 3-phosphate and glycerone phosphate from D-glucose: step 2/4. Functionally, catalyzes the reversible isomerization of glucose-6-phosphate to fructose-6-phosphate. In Streptococcus pneumoniae serotype 4 (strain ATCC BAA-334 / TIGR4), this protein is Glucose-6-phosphate isomerase.